We begin with the raw amino-acid sequence, 370 residues long: Elongation factor Ts, mitochondrial (370 aa).

The N-terminal 29 residues, 1-29, are a transit peptide targeting the mitochondrion; that stretch reads MALLSAAPRALRLPRRLPLGAALPALRAL.

It belongs to the EF-Ts family.

It is found in the mitochondrion. Its function is as follows. Associates with the EF-Tu.GDP complex and induces the exchange of GDP to GTP. It remains bound to the aminoacyl-tRNA.EF-Tu.GTP complex up to the GTP hydrolysis stage on the ribosome. The sequence is that of Elongation factor Ts, mitochondrial from Cryptococcus neoformans var. neoformans serotype D (strain B-3501A) (Filobasidiella neoformans).